The following is a 347-amino-acid chain: NADH-ubiquinone oxidoreductase chain 2 (347 aa).

11 consecutive transmembrane segments (helical) span residues 3–23 (PPIL…VLTS), 25–45 (HWLT…PILM), 59–79 (YLLT…IDLL), 96–116 (AMMT…FWVP), 122–142 (IHMS…LSIL), 149–169 (INPN…GWGG), 178–198 (ILAY…LYNP), 200–220 (MMIL…MLFM), 237–257 (APLI…LPPL), 274–294 (EMII…YFYM), and 325–345 (LLSP…LLSI).

The protein belongs to the complex I subunit 2 family. As to quaternary structure, core subunit of respiratory chain NADH dehydrogenase (Complex I) which is composed of 45 different subunits. Interacts with TMEM242.

Its subcellular location is the mitochondrion inner membrane. The enzyme catalyses a ubiquinone + NADH + 5 H(+)(in) = a ubiquinol + NAD(+) + 4 H(+)(out). Functionally, core subunit of the mitochondrial membrane respiratory chain NADH dehydrogenase (Complex I) which catalyzes electron transfer from NADH through the respiratory chain, using ubiquinone as an electron acceptor. Essential for the catalytic activity and assembly of complex I. The chain is NADH-ubiquinone oxidoreductase chain 2 from Cynictis penicillata (Yellow mongoose).